A 927-amino-acid polypeptide reads, in one-letter code: Isoleucine--tRNA ligase (927 aa).

Positions 57 to 67 (PFANGNIHMGH) match the 'HIGH' region motif. Glu553 contacts L-isoleucyl-5'-AMP. The short motif at 594-598 (KMSKS) is the 'KMSKS' region element. Lys597 is a binding site for ATP. Residues Cys886, Cys889, Cys906, and Cys909 each contribute to the Zn(2+) site.

Belongs to the class-I aminoacyl-tRNA synthetase family. IleS type 1 subfamily. In terms of assembly, monomer. Zn(2+) is required as a cofactor.

It localises to the cytoplasm. It catalyses the reaction tRNA(Ile) + L-isoleucine + ATP = L-isoleucyl-tRNA(Ile) + AMP + diphosphate. In terms of biological role, catalyzes the attachment of isoleucine to tRNA(Ile). As IleRS can inadvertently accommodate and process structurally similar amino acids such as valine, to avoid such errors it has two additional distinct tRNA(Ile)-dependent editing activities. One activity is designated as 'pretransfer' editing and involves the hydrolysis of activated Val-AMP. The other activity is designated 'posttransfer' editing and involves deacylation of mischarged Val-tRNA(Ile). This chain is Isoleucine--tRNA ligase, found in Lactobacillus acidophilus (strain ATCC 700396 / NCK56 / N2 / NCFM).